The primary structure comprises 160 residues: Baculoviral IAP repeat-containing protein 5.1-B (160 aa).

The BIR repeat unit spans residues Gln13–Trp83. The residue at position 43 (Thr43) is a Phosphothreonine; by CDK1. Zn(2+) is bound by residues Cys66, Cys69, His86, and Cys93.

It belongs to the IAP family. As to quaternary structure, component of the CPC at least composed of survivin/birc5, incenp, cdca8/borealin and/or cdca9/dasra-A, and aurkb/aurora-B. Interacts directly with incenp (via N-terminus), and may weakly interact with aurkb (via N-terminus) to stabilize the complex. Interacts with GTP-bound ran in both the S and M phases of the cell cycle. Also found in a complex with ubiquitin-mediated signaling proteins including at least usp9x/xFAM, nploc4/npl4 and ufd1. In terms of processing, ubiquitination is required for centrosome-targeting.

The protein localises to the cytoplasm. It localises to the nucleus. It is found in the chromosome. The protein resides in the centromere. Its subcellular location is the cytoskeleton. The protein localises to the spindle. In terms of biological role, component of the chromosomal passenger complex (CPC), a complex that acts as a key regulator of mitosis. The CPC complex has essential functions at the centromere in ensuring correct chromosome alignment and segregation and is required for chromatin-induced microtubule stabilization and spindle assembly. Stimulates the mitotic kinase activity of aurkb/aurora-B in the CPC. Does not appear to exhibit anti-apoptotic activity. CPC. Does not appear to exhibit anti-apoptotic activity. The sequence is that of Baculoviral IAP repeat-containing protein 5.1-B (birc5.1-b) from Xenopus laevis (African clawed frog).